The following is an 816-amino-acid chain: Microbial collagenase (816 aa).

An N-terminal signal peptide occupies residues 1–27 (MSHIRFFPRHRLALACMLASVSSFSFA). Zn(2+) is bound at residue His-435. Glu-436 is an active-site residue. Position 439 (His-439) interacts with Zn(2+).

It belongs to the peptidase M9A family. It depends on Zn(2+) as a cofactor.

The protein resides in the secreted. The catalysed reaction is Digestion of native collagen in the triple helical region at Xaa-|-Gly bonds. With synthetic peptides, a preference is shown for Gly at P3 and P1', Pro and Ala at P2 and P2', and hydroxyproline, Ala or Arg at P3'.. Its function is as follows. Possesses gelatinolytic activity. Can cause weak haemolysis on blood agar. This is Microbial collagenase (prt) from Vibrio parahaemolyticus serotype O3:K6 (strain RIMD 2210633).